Consider the following 220-residue polypeptide: Ribosomal RNA small subunit methyltransferase G (220 aa).

S-adenosyl-L-methionine-binding positions include Gly82, Leu87, 105 to 107 (DST), 133 to 134 (VE), and Arg147.

This sequence belongs to the methyltransferase superfamily. RNA methyltransferase RsmG family.

The protein resides in the cytoplasm. In terms of biological role, specifically methylates the N7 position of a guanine in 16S rRNA. The protein is Ribosomal RNA small subunit methyltransferase G of Chlorobium limicola (strain DSM 245 / NBRC 103803 / 6330).